A 279-amino-acid polypeptide reads, in one-letter code: Ribonuclease Z (279 aa).

Positions 64, 66, 68, 69, 134, 191, and 245 each coordinate Zn(2+). D68 acts as the Proton acceptor in catalysis.

This sequence belongs to the RNase Z family. In terms of assembly, homodimer. Zn(2+) is required as a cofactor.

The catalysed reaction is Endonucleolytic cleavage of RNA, removing extra 3' nucleotides from tRNA precursor, generating 3' termini of tRNAs. A 3'-hydroxy group is left at the tRNA terminus and a 5'-phosphoryl group is left at the trailer molecule.. Its function is as follows. Zinc phosphodiesterase, which displays some tRNA 3'-processing endonuclease activity. Probably involved in tRNA maturation, by removing a 3'-trailer from precursor tRNA. The chain is Ribonuclease Z from Methanopyrus kandleri (strain AV19 / DSM 6324 / JCM 9639 / NBRC 100938).